Reading from the N-terminus, the 147-residue chain is Large ribosomal subunit protein uL22c (147 aa).

It belongs to the universal ribosomal protein uL22 family. As to quaternary structure, part of the 50S ribosomal subunit.

The protein resides in the plastid. It is found in the chloroplast. This protein binds specifically to 23S rRNA. Functionally, the globular domain of the protein is located near the polypeptide exit tunnel on the outside of the subunit, while an extended beta-hairpin is found that lines the wall of the exit tunnel in the center of the 70S ribosome. This chain is Large ribosomal subunit protein uL22c (rpl22), found in Lolium perenne (Perennial ryegrass).